Here is a 374-residue protein sequence, read N- to C-terminus: UDP-N-acetylglucosamine--N-acetylmuramyl-(pentapeptide) pyrophosphoryl-undecaprenol N-acetylglucosamine transferase (374 aa).

UDP-N-acetyl-alpha-D-glucosamine is bound by residues T13–G15, N124, R165, S193, and Q294.

This sequence belongs to the glycosyltransferase 28 family. MurG subfamily.

The protein resides in the cell inner membrane. The catalysed reaction is di-trans,octa-cis-undecaprenyl diphospho-N-acetyl-alpha-D-muramoyl-L-alanyl-D-glutamyl-meso-2,6-diaminopimeloyl-D-alanyl-D-alanine + UDP-N-acetyl-alpha-D-glucosamine = di-trans,octa-cis-undecaprenyl diphospho-[N-acetyl-alpha-D-glucosaminyl-(1-&gt;4)]-N-acetyl-alpha-D-muramoyl-L-alanyl-D-glutamyl-meso-2,6-diaminopimeloyl-D-alanyl-D-alanine + UDP + H(+). It functions in the pathway cell wall biogenesis; peptidoglycan biosynthesis. Its function is as follows. Cell wall formation. Catalyzes the transfer of a GlcNAc subunit on undecaprenyl-pyrophosphoryl-MurNAc-pentapeptide (lipid intermediate I) to form undecaprenyl-pyrophosphoryl-MurNAc-(pentapeptide)GlcNAc (lipid intermediate II). The sequence is that of UDP-N-acetylglucosamine--N-acetylmuramyl-(pentapeptide) pyrophosphoryl-undecaprenol N-acetylglucosamine transferase from Rhizobium etli (strain ATCC 51251 / DSM 11541 / JCM 21823 / NBRC 15573 / CFN 42).